The primary structure comprises 158 residues: 2-C-methyl-D-erythritol 2,4-cyclodiphosphate synthase (158 aa).

Positions 9 and 11 each coordinate a divalent metal cation. Residues 9-11 (DVH) and 35-36 (HS) contribute to the 4-CDP-2-C-methyl-D-erythritol 2-phosphate site. Residue histidine 43 participates in a divalent metal cation binding. 4-CDP-2-C-methyl-D-erythritol 2-phosphate is bound by residues 57 to 59 (DIG), 62 to 66 (FPDTD), 101 to 107 (AQKPKML), 133 to 136 (TTTE), phenylalanine 140, and arginine 143.

It belongs to the IspF family. In terms of assembly, homotrimer. A divalent metal cation is required as a cofactor.

The enzyme catalyses 4-CDP-2-C-methyl-D-erythritol 2-phosphate = 2-C-methyl-D-erythritol 2,4-cyclic diphosphate + CMP. Its pathway is isoprenoid biosynthesis; isopentenyl diphosphate biosynthesis via DXP pathway; isopentenyl diphosphate from 1-deoxy-D-xylulose 5-phosphate: step 4/6. Involved in the biosynthesis of isopentenyl diphosphate (IPP) and dimethylallyl diphosphate (DMAPP), two major building blocks of isoprenoid compounds. Catalyzes the conversion of 4-diphosphocytidyl-2-C-methyl-D-erythritol 2-phosphate (CDP-ME2P) to 2-C-methyl-D-erythritol 2,4-cyclodiphosphate (ME-CPP) with a corresponding release of cytidine 5-monophosphate (CMP). The polypeptide is 2-C-methyl-D-erythritol 2,4-cyclodiphosphate synthase (Bacillus subtilis (strain 168)).